Reading from the N-terminus, the 1441-residue chain is MSTIFQDLVDSTVIKNAVQGQFTSLVSNNLVVSKVNSLHLFEIEKIQKDESSFPLDDSLQNEFSTSIIDESQAFMETNMHLIRTNEQTTYVLRLVSQVKVFGTITEISALKGKGSNGCDLLIMLTDYAKVSTLEWDMQSQSFVTNSLHYYEDVKSSNICSSHTPTQLLVDPDSDCCLLRFLTDMMAIIPYPANEDLDMEEAAIENSKISSSYAYKPSFVLASSQLDASISRILDVKFLYGYREPTLAILYSPEQTSTVTLPLRKDTVLFSLVTLDLEQRASAVITTIQSLPYDIYASVSIPTPLGGSLLLGGNELIYVDSAGRTVGIGVNSYYSKCTDFPLQDQSDFNLELEGTIAIPLTSSKTETPFVVLVHTSGQFFYLDFLLDGKSVKGLSLQALDLEINDDFLKSGITCAVPAGENLVFLGSQTTDSYLLRWSRRTTNEEVRLDEGDDTLYGTNDAEMDDMLDIYETDESVGSKRKIAYENGPLRLEICDVLTNIGPITDFAVGKAGSYSYFPQDNHGPLELVGTAGADGAGGLVVFRRNIFPLIAGEFQFDGCEALWTVSISGKLRNMKSRIQAQYSNPELETYLVLSKEKESFIFLAGETFDEVQHSDFSKDSKTLNVGSLLSGMRMVQICPTSLRVYDSNLRLTQLFNFSKKQIVVSTSICDPCIIVVFLGGGIALYKMDLKSQRLIKTDLQNRLSDVKTASLVSPDSSALFAKLFTYNETLNAKGQIANGMNDSASETDLDIQPNHKTSNNDQMGYDQSVSADDVPEVDNTIVTEKNVSNLDQESLEKHPILFALTDEGKLKVYNLADFSLLMECDVFDLPPTLFNGMESERTYFNKESSQELVELLVADLGDDFKEPHLFLRSRLNEITVYKAFLYSNTDKHKNLLAFAKVPQETMTREFQANVGTPRDAESTMEKKASSSVDHLKMTALEVVGNHSAVFVTGRKPFLILSTLHSNAKFFPISSNIPILSVAPFHAHHAPQGYIYVDENSFIRICKFQEDFEYDNKWPYKKVSLGKQINGIAYHPTKMVYAVGSAVPIEFKVTDEDGNEPYAITDDNDYLPMANTGSLDLVSPLTWTVIDSYEFQQFEIPLSVALVNLEVSETTKLRKPYIAVGTSITKGEDIAVRGSTYLFEIIDVVPQPGRPETRHKLKLVTREEIKGTVAVVCEVDGYLLSGQGQKVIVRALEDEDHLVGVSFIDLGSYTLSAKCLRNLLLFGDVRQNVTFVGFAEEPYRMTLFSKGQEALNVSAADFLVQGENLYFVVADTSGNLRLLAYDPENPESHSGERLVTRGDFHIGNVITAMTILPKEKKHQNAEYGYDTGDDFSCVMVNSDGGLQMLVPISDRVYRRLNIIQNYLANRVNTIGGLNPKSYRLITSPSNLTNPTRRILDGMLIDYFTYMSVAHRHEMAHKCGVPVSTIMNDLVELDEALSYM.

The disordered stretch occupies residues 741–763 (DSASETDLDIQPNHKTSNNDQMG). Over residues 753–763 (NHKTSNNDQMG) the composition is skewed to polar residues.

Belongs to the CFT1 family.

The protein resides in the cytoplasm. It localises to the nucleus. Its function is as follows. RNA-binding component of the cleavage and polyadenylation factor (CPF) complex, which plays a key role in polyadenylation-dependent pre-mRNA 3'-end formation and cooperates with cleavage factors including the CFIA complex and NAB4/CFIB. Involved in poly(A) site recognition. May be involved in coupling transcription termination and mRNA 3'-end formation. The chain is Protein cft1 (cft1) from Schizosaccharomyces pombe (strain 972 / ATCC 24843) (Fission yeast).